A 569-amino-acid polypeptide reads, in one-letter code: AA9 family lytic polysaccharide monooxygenase A (569 aa).

An N-terminal signal peptide occupies residues 1-16 (MRIFSLALGFLPLVAG). Cu(2+) contacts are provided by His17 and His99. The cysteines at positions 59 and 189 are disulfide-linked. Residue Asn112 is glycosylated (N-linked (GlcNAc...) asparagine). O2 is bound by residues His174 and Gln184. Position 186 (Tyr186) interacts with Cu(2+). N-linked (GlcNAc...) asparagine glycans are attached at residues Asn244 and Asn381. Low complexity predominate over residues 399-424 (AADATATATATTEDAEATTAAEAAAT). The interval 399–439 (AADATATATATTEDAEATTAAEAAATSGAGRPGRGHGHGRG) is disordered. An N-linked (GlcNAc...) asparagine glycan is attached at Asn472.

Belongs to the polysaccharide monooxygenase AA9 family. Cu(2+) is required as a cofactor.

It is found in the secreted. The catalysed reaction is [(1-&gt;4)-beta-D-glucosyl]n+m + reduced acceptor + O2 = 4-dehydro-beta-D-glucosyl-[(1-&gt;4)-beta-D-glucosyl]n-1 + [(1-&gt;4)-beta-D-glucosyl]m + acceptor + H2O.. Functionally, lytic polysaccharide monooxygenase (LPMO) that depolymerizes crystalline and amorphous polysaccharides via the oxidation of scissile alpha- or beta-(1-4)-glycosidic bonds, yielding C4 oxidation products. Catalysis by LPMOs requires the reduction of the active-site copper from Cu(II) to Cu(I) by a reducing agent and H(2)O(2) or O(2) as a cosubstrate. The chain is AA9 family lytic polysaccharide monooxygenase A from Emericella nidulans (strain FGSC A4 / ATCC 38163 / CBS 112.46 / NRRL 194 / M139) (Aspergillus nidulans).